Here is a 223-residue protein sequence, read N- to C-terminus: MGQKVNPTGIRLGYIKDWSSRWFADSKSYPVFLNNDLKVREFLKQKLKHASVSRIQINRLANNAQITIHTARPGIVIGKRGEDIDALRRDVSRFMGVPVQVSVEEIRKPELDAQLVAEGVAQQLEKRIMFRRAMKRAVQNTLRVGAEGIKISVAGRLNGAEIARTEWYREGRVPLHTFRADIDYGFAEAVTTYGVIGVKVWIFKGEVFEPVHTEPKTRSAVEA.

The 69-residue stretch at 39–107 folds into the KH type-2 domain; the sequence is VREFLKQKLK…PVQVSVEEIR (69 aa).

It belongs to the universal ribosomal protein uS3 family. Part of the 30S ribosomal subunit. Forms a tight complex with proteins S10 and S14.

In terms of biological role, binds the lower part of the 30S subunit head. Binds mRNA in the 70S ribosome, positioning it for translation. The chain is Small ribosomal subunit protein uS3 from Methylococcus capsulatus (strain ATCC 33009 / NCIMB 11132 / Bath).